We begin with the raw amino-acid sequence, 427 residues long: Trigger factor (427 aa).

The PPIase FKBP-type domain maps to 163–248; the sequence is GDTVVIDFVG…IHEVKTKEVP (86 aa).

This sequence belongs to the FKBP-type PPIase family. Tig subfamily.

The protein resides in the cytoplasm. The catalysed reaction is [protein]-peptidylproline (omega=180) = [protein]-peptidylproline (omega=0). Involved in protein export. Acts as a chaperone by maintaining the newly synthesized protein in an open conformation. Functions as a peptidyl-prolyl cis-trans isomerase. This Streptococcus agalactiae serotype V (strain ATCC BAA-611 / 2603 V/R) protein is Trigger factor.